Here is a 299-residue protein sequence, read N- to C-terminus: 4-hydroxybenzoate octaprenyltransferase (299 aa).

7 helical membrane-spanning segments follow: residues 34–54 (IGSLLLLWPTWWALWLAADGL), 57–77 (LWTLFVFTAGVWLTRSAGCVI), 108–128 (LWVFVVLMLVAFALVFTLNWL), 163–183 (WGIPMAFAAVQGSVPVLGWLL), 221–241 (FDLVAQGILYALMFAVLALVD), 245–265 (DLGAAYWAGLGVAALLVAYEF), and 277–297 (FRAFLHNNWVGLAIFVGIAVA).

It belongs to the UbiA prenyltransferase family. The cofactor is Mg(2+).

It localises to the cell inner membrane. It catalyses the reaction all-trans-octaprenyl diphosphate + 4-hydroxybenzoate = 4-hydroxy-3-(all-trans-octaprenyl)benzoate + diphosphate. It functions in the pathway cofactor biosynthesis; ubiquinone biosynthesis. Its function is as follows. Catalyzes the prenylation of para-hydroxybenzoate (PHB) with an all-trans polyprenyl group. Mediates the second step in the final reaction sequence of ubiquinone-8 (UQ-8) biosynthesis, which is the condensation of the polyisoprenoid side chain with PHB, generating the first membrane-bound Q intermediate 3-octaprenyl-4-hydroxybenzoate. This chain is 4-hydroxybenzoate octaprenyltransferase, found in Xanthomonas oryzae pv. oryzae (strain MAFF 311018).